The following is a 285-amino-acid chain: Meiotically up-regulated gene 74 protein (285 aa).

Its subcellular location is the cytoplasm. Functionally, has a role in meiosis. In Schizosaccharomyces pombe (strain 972 / ATCC 24843) (Fission yeast), this protein is Meiotically up-regulated gene 74 protein (mug74).